Consider the following 626-residue polypeptide: MRKKKFKAESKRLLDMMINSIYTQKEIFLRELISNASDAIDKIYYKALTDDSLTFDQDNYYIKVTADKEARTLTVTDTGIGMTKDELEQHLGTIAKSGSLAFKQENDSKDGHDIIGQFGVGFYAAFMVADKVTVKSKALGSDEAYVWESEGAAGYTIAPCDKETIGTEITLKIKENTEDESYDEFLENYRIKAIVKKYSDFIRYPIKMEETVNKPKEGSENEFEEVQEEQTVNSMVPIWRKNKSELTDEDYEAFYAEKHYGFDKPLTHVHISVDGAVRYNSILFIPENMPFDYYTKEFEKGLELYSNGVLIMNKCADLLPDHFSFVKGMVDSEDLSLNISREMLQHDRQLKLIAKNINKKIKAELKSLLKNKREKYESFYESFGRQLKFGVYNDFGANKDVLKDLLLFYSSKEKKLVTLDEYVSRMPEDQKYIYYASGDSYERIEKLPQTEMVADKGYEILYFTEDIDEFAIKMLTSYEEKEFKSVSSADLGIDSDEDEKQTEAEENEYKDLFESMKEILADKVKNVRASKRLKSHPVCFATDGEVTIEMEKVLNAMPDSQQVKAEKVLEINPNHEVFETLKNAHGQDREKLALYTNLLYNQALLIEGLPIHDPVEFTNDICKVMV.

The tract at residues 1–341 is a; substrate-binding; the sequence is MRKKKFKAES…SEDLSLNISR (341 aa). The tract at residues 342–552 is b; sequence EMLQHDRQLK…DGEVTIEMEK (211 aa). Positions 553-626 are c; it reads VLNAMPDSQQ…FTNDICKVMV (74 aa).

Belongs to the heat shock protein 90 family. As to quaternary structure, homodimer.

The protein resides in the cytoplasm. Molecular chaperone. Has ATPase activity. The sequence is that of Chaperone protein HtpG from Bacillus velezensis (strain DSM 23117 / BGSC 10A6 / LMG 26770 / FZB42) (Bacillus amyloliquefaciens subsp. plantarum).